The following is a 245-amino-acid chain: 8-amino-3,8-dideoxy-manno-octulosonate cytidylyltransferase (245 aa).

It belongs to the KdsB family.

The protein resides in the cytoplasm. The catalysed reaction is 8-amino-3,8-dideoxy-alpha-D-manno-octulosonate + CTP = CMP-8-amino-3,8-dideoxy-alpha-D-manno-oct-2-ulosonate + diphosphate. Its pathway is bacterial outer membrane biogenesis; lipopolysaccharide biosynthesis. Functionally, activates KDO8N (a required 8-carbon sugar) for incorporation into bacterial lipopolysaccharide in the Shewanella genus. The sequence is that of 8-amino-3,8-dideoxy-manno-octulosonate cytidylyltransferase from Shewanella pealeana (strain ATCC 700345 / ANG-SQ1).